A 330-amino-acid chain; its full sequence is Phosphate acyltransferase (330 aa).

This sequence belongs to the PlsX family. Homodimer. Probably interacts with PlsY.

The protein resides in the cytoplasm. It catalyses the reaction a fatty acyl-[ACP] + phosphate = an acyl phosphate + holo-[ACP]. It participates in lipid metabolism; phospholipid metabolism. Catalyzes the reversible formation of acyl-phosphate (acyl-PO(4)) from acyl-[acyl-carrier-protein] (acyl-ACP). This enzyme utilizes acyl-ACP as fatty acyl donor, but not acyl-CoA. This Bacillus cereus (strain AH820) protein is Phosphate acyltransferase.